The sequence spans 225 residues: Germin-like protein 3-8 (225 aa).

Residues 1 to 25 (MSRTSSAPLLVLSAALAVLASTCIA) form the signal peptide. C34 and C57 form a disulfide bridge. In terms of domain architecture, Cupin type-1 spans 71–219 (AGLAVASDTD…SFQVDAKIIK (149 aa)). The N-linked (GlcNAc...) asparagine glycan is linked to N86. H119, H121, E126, and H165 together coordinate Mn(2+).

The protein belongs to the germin family. As to quaternary structure, oligomer (believed to be a pentamer but probably hexamer).

The protein localises to the secreted. It is found in the extracellular space. Its subcellular location is the apoplast. May play a role in plant defense. Probably has no oxalate oxidase activity even if the active site is conserved. The sequence is that of Germin-like protein 3-8 from Oryza sativa subsp. japonica (Rice).